Here is a 367-residue protein sequence, read N- to C-terminus: 3-methyl-2-oxobutanoate dehydrogenase subunit alpha (367 aa).

Residues 99 to 101 (QYR), 141 to 142 (PI), 170 to 176 (GDGATSE), 200 to 204 (NQWAI), and H269 contribute to the thiamine diphosphate site. Position 100 (Y100) interacts with substrate. 2 residues coordinate Mg(2+): D171 and N200.

In terms of assembly, heteromer of E1 alpha (BkdA) and beta (BkdB) subunits. Part of the BCKADH complex, consisting of multiple copies of BkdA/BkdB (E1), BkdC (E2) and Lpd (E3). The cofactor is Mg(2+). Requires thiamine diphosphate as cofactor.

It carries out the reaction N(6)-[(R)-lipoyl]-L-lysyl-[protein] + 3-methyl-2-oxobutanoate + H(+) = N(6)-[(R)-S(8)-2-methylpropanoyldihydrolipoyl]-L-lysyl-[protein] + CO2. Functionally, component of the branched-chain alpha-ketoacid dehydrogenase (BCKADH) complex, that catalyzes the overall conversion of branched-chain alpha-ketoacids to acyl-CoA and CO(2). The polypeptide is 3-methyl-2-oxobutanoate dehydrogenase subunit alpha (bkdA) (Mycobacterium tuberculosis (strain CDC 1551 / Oshkosh)).